Consider the following 99-residue polypeptide: uncharacterized protein (99 aa).

Transmembrane regions (helical) follow at residues 7–29, 39–61, and 68–90; these read FFISYFLPLISFLGLLNLLYTLY, FISSSVVSIFTILFGTMPYARYN, and FCNLMVFVLPVSFFLVSLLLWLL.

The protein resides in the cell membrane. This is an uncharacterized protein from Archaeoglobus fulgidus (strain ATCC 49558 / DSM 4304 / JCM 9628 / NBRC 100126 / VC-16).